The sequence spans 400 residues: NADH-quinone oxidoreductase subunit D (400 aa).

The protein belongs to the complex I 49 kDa subunit family. As to quaternary structure, NDH-1 is composed of 14 different subunits. Subunits NuoB, C, D, E, F, and G constitute the peripheral sector of the complex.

The protein localises to the cell inner membrane. It carries out the reaction a quinone + NADH + 5 H(+)(in) = a quinol + NAD(+) + 4 H(+)(out). In terms of biological role, NDH-1 shuttles electrons from NADH, via FMN and iron-sulfur (Fe-S) centers, to quinones in the respiratory chain. The immediate electron acceptor for the enzyme in this species is believed to be a menaquinone. Couples the redox reaction to proton translocation (for every two electrons transferred, four hydrogen ions are translocated across the cytoplasmic membrane), and thus conserves the redox energy in a proton gradient. In Chlorobium phaeovibrioides (strain DSM 265 / 1930) (Prosthecochloris vibrioformis (strain DSM 265)), this protein is NADH-quinone oxidoreductase subunit D.